Here is a 123-residue protein sequence, read N- to C-terminus: MATFEEVSVLGFEEFDKAVKEHEGKTIFAYFSGSKDTEGKSWCPDCVEAEPVIREGLKHVTEDCVFIYCQVGDKPYWKDPNNDFRQKLKITAVPTLLKYGTPQKLVESECCQSSLVEMIFSED.

A2 carries the N-acetylalanine modification. The 83-residue stretch at 41-123 folds into the Thioredoxin domain; the sequence is SWCPDCVEAE…SLVEMIFSED (83 aa). Residues C43 and C46 each act as nucleophile in the active site. C43 and C46 are disulfide-bonded.

Belongs to the thioredoxin family. Interacts with TRXR1 and DYNLL1/DNCL1. The oxidized protein is reduced by TRXR1.

The protein resides in the cytoplasm. Its function is as follows. Disulfide reductase. May participate in various redox reactions through the reversible oxidation of its active center dithiol to a disulfide and catalyze dithiol-disulfide exchange reactions. Modulates TNF-alpha signaling and NF-kappa-B activation. Has peroxidase activity and may contribute to the elimination of cellular hydrogen peroxide. In Mus musculus (Mouse), this protein is Thioredoxin domain-containing protein 17 (Txndc17).